A 223-amino-acid chain; its full sequence is Pre-mRNA-splicing factor SPF27 (223 aa).

Positions Asn-139–Tyr-223 form a coiled coil.

It belongs to the SPF27 family. As to quaternary structure, component of the pre-catalytic and catalytic spliceosome complexes. Component of the postcatalytic spliceosome P complex.

It is found in the nucleus. In terms of biological role, required for pre-mRNA splicing as component of the activated spliceosome. May have a scaffolding role in the spliceosome assembly as it contacts all other components of the core complex. The protein is Pre-mRNA-splicing factor SPF27 (bcas2) of Xenopus tropicalis (Western clawed frog).